The primary structure comprises 288 residues: 4-diphosphocytidyl-2-C-methyl-D-erythritol kinase (288 aa).

K13 is an active-site residue. 96–106 (PMGGGIGGGSS) contacts ATP. D138 is a catalytic residue.

The protein belongs to the GHMP kinase family. IspE subfamily.

It catalyses the reaction 4-CDP-2-C-methyl-D-erythritol + ATP = 4-CDP-2-C-methyl-D-erythritol 2-phosphate + ADP + H(+). It functions in the pathway isoprenoid biosynthesis; isopentenyl diphosphate biosynthesis via DXP pathway; isopentenyl diphosphate from 1-deoxy-D-xylulose 5-phosphate: step 3/6. Catalyzes the phosphorylation of the position 2 hydroxy group of 4-diphosphocytidyl-2C-methyl-D-erythritol. The chain is 4-diphosphocytidyl-2-C-methyl-D-erythritol kinase from Aliivibrio fischeri (strain MJ11) (Vibrio fischeri).